The following is a 199-amino-acid chain: Ribosome maturation factor RimP (199 aa).

A disordered region spans residues 165–199; the sequence is AGNLPPQPEDDEDMLADFEIDESEDEEDPETGDVQ. Acidic residues predominate over residues 172–199; it reads PEDDEDMLADFEIDESEDEEDPETGDVQ.

It belongs to the RimP family.

It is found in the cytoplasm. Its function is as follows. Required for maturation of 30S ribosomal subunits. This chain is Ribosome maturation factor RimP, found in Hyphomonas neptunium (strain ATCC 15444).